The sequence spans 523 residues: Spastin (523 aa).

Over Met-1 to Asn-41 the chain is Cytoplasmic. The helical intramembrane region spans Ala-42–Ser-58. 3 stretches are compositionally biased toward low complexity: residues Leu-57 to Thr-71, Gln-171 to Pro-184, and Thr-193 to Asn-210. 2 disordered regions span residues Leu-57–Gln-77 and Gly-129–Ile-218. The Cytoplasmic portion of the chain corresponds to Thr-59–Ile-523.

This sequence belongs to the AAA ATPase family. Spastin subfamily. In terms of assembly, homohexamer. The homohexamer is stabilized by ATP-binding. The homohexamer may adopt a ring conformation through which microtubules pass prior to being severed.

The protein resides in the membrane. The catalysed reaction is n ATP + n H2O + a microtubule = n ADP + n phosphate + (n+1) alpha/beta tubulin heterodimers.. Functionally, ATP-dependent microtubule severing protein. Stimulates microtubule minus-end depolymerization and poleward microtubule flux in the mitotic spindle. This Naegleria gruberi (Amoeba) protein is Spastin.